The sequence spans 284 residues: Ubiquitin thioesterase otubain-like (284 aa).

Residues 77-274 (GEIRYIRGDG…PGHYDVIYKK (198 aa)) enclose the OTU domain. Residue D85 is part of the active site. C88 (nucleophile) is an active-site residue. I176 contributes to the substrate binding site. Active-site residues include H245 and H267.

This sequence belongs to the peptidase C65 family.

It carries out the reaction Thiol-dependent hydrolysis of ester, thioester, amide, peptide and isopeptide bonds formed by the C-terminal Gly of ubiquitin (a 76-residue protein attached to proteins as an intracellular targeting signal).. Hydrolase that can remove conjugated ubiquitin from proteins and plays an important regulatory role at the level of protein turnover by preventing degradation. Specifically cleaves 'Lys-48'-linked polyubiquitin. The protein is Ubiquitin thioesterase otubain-like (otub-1) of Caenorhabditis elegans.